A 295-amino-acid polypeptide reads, in one-letter code: Light-independent protochlorophyllide reductase iron-sulfur ATP-binding protein (295 aa).

Residues 39-44 (GIGKST) and K68 each bind ATP. S43 lines the Mg(2+) pocket. Positions 124 and 158 each coordinate [4Fe-4S] cluster. 209-210 (NR) lines the ATP pocket.

It belongs to the NifH/BchL/ChlL family. In terms of assembly, homodimer. Protochlorophyllide reductase is composed of three subunits; ChlL, ChlN and ChlB. It depends on [4Fe-4S] cluster as a cofactor.

The catalysed reaction is chlorophyllide a + oxidized 2[4Fe-4S]-[ferredoxin] + 2 ADP + 2 phosphate = protochlorophyllide a + reduced 2[4Fe-4S]-[ferredoxin] + 2 ATP + 2 H2O. The protein operates within porphyrin-containing compound metabolism; chlorophyll biosynthesis (light-independent). Component of the dark-operative protochlorophyllide reductase (DPOR) that uses Mg-ATP and reduced ferredoxin to reduce ring D of protochlorophyllide (Pchlide) to form chlorophyllide a (Chlide). This reaction is light-independent. The L component serves as a unique electron donor to the NB-component of the complex, and binds Mg-ATP. The sequence is that of Light-independent protochlorophyllide reductase iron-sulfur ATP-binding protein from Prochlorococcus marinus (strain MIT 9312).